Here is a 300-residue protein sequence, read N- to C-terminus: 3-hydroxy-3-isohexenylglutaryl-CoA/hydroxy-methylglutaryl-CoA lyase (300 aa).

One can recognise a Pyruvate carboxyltransferase domain in the interval 7-274; sequence VRLVEVGPRD…HTGVDMHALV (268 aa). A substrate-binding site is contributed by arginine 15. Positions 16, 207, and 209 each coordinate a divalent metal cation. Residue cysteine 240 is part of the active site. Asparagine 249 serves as a coordination point for a divalent metal cation.

It belongs to the HMG-CoA lyase family. As to quaternary structure, homodimer. Mg(2+) is required as a cofactor. Mn(2+) serves as cofactor.

It catalyses the reaction 3-hydroxy-3-(4-methylpent-3-en-1-yl)glutaryl-CoA = 7-methyl-3-oxooct-6-enoyl-CoA + acetate. It carries out the reaction (3S)-3-hydroxy-3-methylglutaryl-CoA = acetoacetate + acetyl-CoA. It functions in the pathway metabolic intermediate metabolism; (S)-3-hydroxy-3-methylglutaryl-CoA degradation; acetoacetate from (S)-3-hydroxy-3-methylglutaryl-CoA: step 1/1. Its function is as follows. Involved in the L-leucine, isovalerate and acyclic monoterpene catabolism. Catalyzes the cleavage of 3-hydroxy-3-methylglutaryl-CoA (HMG-CoA) to yield acetyl-CoA and acetoacetate. It can also catalyze the cleavage of 3-hydroxy-3-isohexenylglutaryl-CoA (HIHG_CoA) to yield 7-methyl-3-oxooct-6-enoyl-CoA and acetate. The protein is 3-hydroxy-3-isohexenylglutaryl-CoA/hydroxy-methylglutaryl-CoA lyase of Pseudomonas aeruginosa (strain ATCC 15692 / DSM 22644 / CIP 104116 / JCM 14847 / LMG 12228 / 1C / PRS 101 / PAO1).